A 392-amino-acid chain; its full sequence is Protein FAM53C (392 aa).

An N-acetylmethionine modification is found at methionine 1. The disordered stretch occupies residues 78–119 (LRPPSRGNSPKEQPFSQVLRPEPPDPEKLPVPPAPPSKRHCR). Residues 83–93 (RGNSPKEQPFS) are compositionally biased toward polar residues. Phosphoserine occurs at positions 122, 162, 232, 234, 255, and 273. Disordered regions lie at residues 141–167 (LWTP…PKRV) and 204–294 (RPCA…EDPR). Low complexity predominate over residues 241 to 256 (ASRFLPSARSSPASSP). A compositionally biased stretch (basic and acidic residues) spans 278–294 (LDARKTGVKRRHEEDPR). Position 299 is a phosphoserine (serine 299). The segment at 341 to 364 (ASCSPTGGSSQVLSESEEEEEGAV) is disordered.

This sequence belongs to the FAM53 family.

The polypeptide is Protein FAM53C (Homo sapiens (Human)).